Reading from the N-terminus, the 375-residue chain is E3 ubiquitin-protein ligase RHF2A (375 aa).

The RING-type; atypical zinc finger occupies 33-74 (CSICLESFCESDPSTLTSCKHEYHLQCILEWCQRSSQCPMCW). Residues 146–159 (RARHGVRREGHRSR) are compositionally biased toward basic residues. 3 disordered regions span residues 146 to 165 (RARH…SQGH), 172 to 262 (SSQP…SESL), and 318 to 375 (ERLE…SGSS). Residues 178 to 188 (SSPPPHPPMPS) are compositionally biased toward pro residues. 2 stretches are compositionally biased toward polar residues: residues 211 to 245 (SHQS…SSPS) and 327 to 336 (RPSTASVSDV). The segment covering 337–365 (SENHTPETNNEHNRAAAGDEHSVNERGVK) has biased composition (basic and acidic residues).

The enzyme catalyses S-ubiquitinyl-[E2 ubiquitin-conjugating enzyme]-L-cysteine + [acceptor protein]-L-lysine = [E2 ubiquitin-conjugating enzyme]-L-cysteine + N(6)-ubiquitinyl-[acceptor protein]-L-lysine.. It functions in the pathway protein modification; protein ubiquitination. E3 ubiquitin-protein ligase involved in the positive regulation of the gametogenesis progression. Required for the degradation of KRP6, a cyclin-dependent kinase inhibitor which accumulates during meiosis and blocks the progression of subsequent mitoses during gametophytes development. Functions in association with RHF1A. The polypeptide is E3 ubiquitin-protein ligase RHF2A (Arabidopsis thaliana (Mouse-ear cress)).